Here is a 671-residue protein sequence, read N- to C-terminus: Talaropentaene synthase (671 aa).

Residue D92 coordinates Mg(2+). The DDXXD 1 signature appears at 92–96 (DDMTD). Positions 223–231 (NDLYSYEKE) match the NSE/DTE motif. Isopentenyl diphosphate is bound by residues K389, R392, and H421. D428 and D432 together coordinate Mg(2+). A DDXXD 2 motif is present at residues 428–432 (DDIED). A dimethylallyl diphosphate-binding site is contributed by R437. R438 contributes to the isopentenyl diphosphate binding site. 6 residues coordinate dimethylallyl diphosphate: K515, T516, Q551, N558, K568, and K578.

It in the N-terminal section; belongs to the terpene synthase family. The protein in the C-terminal section; belongs to the FPP/GGPP synthase family. It depends on Mg(2+) as a cofactor.

The catalysed reaction is 5 isopentenyl diphosphate + dimethylallyl diphosphate = all-trans-hexaprenyl diphosphate + 5 diphosphate. It catalyses the reaction all-trans-hexaprenyl diphosphate = talaropentaene + diphosphate. Its function is as follows. Bifunctional terpene synthase that converts dimethylallyl diphosphate (DMAPP) and isopentenyl diphosphate (IPP) into talaropentaene as a single product. The C-terminal prenyltransferase (PT) domain of MpMS catalyzes formation of hexaprenyl diphosphate (HexPP), whereas the N-terminal terpene cyclase (TC) domain catalyzes the cyclization of HexPP to talaropentaene. This Talaromyces verruculosus (Penicillium verruculosum) protein is Talaropentaene synthase.